We begin with the raw amino-acid sequence, 498 residues long: Probable lysophospholipase BODYGUARD 3 (498 aa).

A signal peptide spans 1 to 55 (MAVMKIKGAATVAGTWLNEAVSFVVFCILDIVDSFLCLLYKAADYLFEAEWKPCY). Cysteine 56 carries N-palmitoyl cysteine lipidation. Residues 220–326 (VLFIHGFISS…LTLLAPPYYP (107 aa)) form the AB hydrolase-1 domain. The active site involves histidine 224. Residue serine 297 is the Nucleophile of the active site. Active-site charge relay system residues include aspartate 446 and histidine 474.

The protein resides in the cell membrane. Its subcellular location is the secreted. The protein localises to the cell wall. In terms of biological role, involved in cuticle development and morphogenesis. This Arabidopsis thaliana (Mouse-ear cress) protein is Probable lysophospholipase BODYGUARD 3.